The primary structure comprises 291 residues: Lys-63-specific deubiquitinase BRCC36 (291 aa).

Alanine 2 is modified (N-acetylalanine). The MPN domain maps to 12–179 (VHLESDAFLV…YTCFQSIQAQ (168 aa)). Zn(2+) contacts are provided by histidine 122, histidine 124, and aspartate 135. The short motif at 122 to 135 (HSHPHITVWPSHVD) is the JAMM motif element. Position 233 is a phosphoserine (serine 233).

The protein belongs to the peptidase M67A family. BRCC36 subfamily. In terms of assembly, component of the ARISC complex, at least composed of UIMC1/RAP80, ABRAXAS1, BRCC3/BRCC36, BABAM2 and BABAM1/NBA1. Component of the BRCA1-A complex, at least composed of BRCA1, BARD1, UIMC1/RAP80, ABRAXAS1, BRCC3/BRCC36, BABAM2 and BABAM1/NBA1. In the BRCA1-A complex, interacts directly with ABRAXAS1 and BABAM2. Component of the BRISC complex, at least composed of ABRAXAS2, BRCC3/BRCC36, BABAM2 and BABAM1/NBA1. Identified in a complex with SHMT2 and the other subunits of the BRISC complex. In the BRISC complex, interacts directly with ABRAXAS2. Identified in a complex with ABRAXAS2 and NUMA1. The BRISC complex interacts with the CSN complex. Component of the BRCA1/BRCA2 containing complex (BRCC), which also contains BRCA1, BRCA2, BARD1, BABAM2 and RAD51. BRCC is a ubiquitin E3 ligase complex that enhances cellular survival following DNA damage. Interacts with BRCA1. Binds polyubiquitin. Interacts with PWWP2B. Interacts with HDAC1; this interaction is enhanced in the presence of PWWP2B. Requires Zn(2+) as cofactor.

It is found in the nucleus. Its subcellular location is the cytoplasm. The protein localises to the cytoskeleton. It localises to the spindle pole. Functionally, metalloprotease that specifically cleaves 'Lys-63'-linked polyubiquitin chains. Does not have activity toward 'Lys-48'-linked polyubiquitin chains. Component of the BRCA1-A complex, a complex that specifically recognizes 'Lys-63'-linked ubiquitinated histones H2A and H2AX at DNA lesions sites, leading to target the BRCA1-BARD1 heterodimer to sites of DNA damage at double-strand breaks (DSBs). In the BRCA1-A complex, it specifically removes 'Lys-63'-linked ubiquitin on histones H2A and H2AX, antagonizing the RNF8-dependent ubiquitination at double-strand breaks (DSBs). Catalytic subunit of the BRISC complex, a multiprotein complex that specifically cleaves 'Lys-63'-linked ubiquitin in various substrates. Mediates the specific 'Lys-63'-specific deubiquitination associated with the COP9 signalosome complex (CSN), via the interaction of the BRISC complex with the CSN complex. The BRISC complex is required for normal mitotic spindle assembly and microtubule attachment to kinetochores via its role in deubiquitinating NUMA1. Plays a role in interferon signaling via its role in the deubiquitination of the interferon receptor IFNAR1; deubiquitination increases IFNAR1 activity by enhancing its stability and cell surface expression. Acts as a regulator of the NLRP3 inflammasome by mediating deubiquitination of NLRP3, leading to NLRP3 inflammasome assembly. Down-regulates the response to bacterial lipopolysaccharide (LPS) via its role in IFNAR1 deubiquitination. Deubiquitinates HDAC1 and PWWP2B leading to their stabilization. This chain is Lys-63-specific deubiquitinase BRCC36 (Brcc3), found in Mus musculus (Mouse).